Consider the following 476-residue polypeptide: Acidic leucine-rich nuclear phosphoprotein 32-related protein 1 (476 aa).

LRR repeat units follow at residues 51 to 72, 73 to 92, and 98 to 119; these read SLEHLSIAGVGVASLAGFPRLR, NLTRLTLSDNRIAGGLDHLV, and SLRDLDLSNNRIQDVGDLSPLA. The LRRCT domain maps to 131–169; it reads CPVTRVKDYRSKVFGMIRTLKYLDKMDADENERPESDDD. The tract at residues 157-476 is disordered; the sequence is DADENERPES…VEDLRPFKHH (320 aa). Acidic residues-rich tracts occupy residues 165-194, 222-232, 252-289, 299-329, 353-371, 379-396, 415-436, and 458-467; these read ESDDDDDDGDGDGDGEEEEDDDDDEDEDPG, DVDEDESDADE, GDEDEYVEEEDDDDEEDYEEEDDLGEEIDEDGDDEDAV, SDEEEDGIEEEDEEEDEDEEEVEDDGEEAEP, EGEDEDENGEIGEEDEERL, EGNDDDEEDVDDEDEDTE, DAAEADDADEDRDEVDDDDDGG, and GDDDEDDDGV.

Belongs to the ANP32 family.

The polypeptide is Acidic leucine-rich nuclear phosphoprotein 32-related protein 1 (Oryza sativa subsp. japonica (Rice)).